The chain runs to 445 residues: T-box transcription factor TBX20 (445 aa).

The T-box DNA-binding region spans Leu108 to Asp287. Residues Glu318 to Thr337 form a disordered region. Polar residues predominate over residues Glu325–Thr337.

In terms of tissue distribution, prominently expressed in the extraembryonic mesoderm, developing heart, eye analage and motor neurons of hindbrain and spinal cord. Expressed in extraembryonic tissues such as the amnion and allantois.

It is found in the nucleus. Acts as a transcriptional activator and repressor required for cardiac development and may have key roles in the maintenance of functional and structural phenotypes in adult heart. The polypeptide is T-box transcription factor TBX20 (Tbx20) (Mus musculus (Mouse)).